Reading from the N-terminus, the 321-residue chain is Phospho-N-acetylmuramoyl-pentapeptide-transferase (321 aa).

Helical transmembrane passes span 6–26 (IFIP…LFIG), 54–74 (MGGV…GLFF), 77–97 (FTPS…LGYL), 117–137 (LIGQ…EGFS), 143–163 (FGVA…FWLV), 175–195 (IDGL…IIAW), 200–220 (FDVV…FPYN), 226–246 (IFMG…ISII), 251–271 (WTLL…ILQV), and 301–321 (IDFV…WILF).

The protein belongs to the glycosyltransferase 4 family. MraY subfamily. Mg(2+) serves as cofactor.

The protein resides in the cell membrane. The enzyme catalyses UDP-N-acetyl-alpha-D-muramoyl-L-alanyl-gamma-D-glutamyl-L-lysyl-D-alanyl-D-alanine + di-trans,octa-cis-undecaprenyl phosphate = Mur2Ac(oyl-L-Ala-gamma-D-Glu-L-Lys-D-Ala-D-Ala)-di-trans,octa-cis-undecaprenyl diphosphate + UMP. It participates in cell wall biogenesis; peptidoglycan biosynthesis. Catalyzes the initial step of the lipid cycle reactions in the biosynthesis of the cell wall peptidoglycan: transfers peptidoglycan precursor phospho-MurNAc-pentapeptide from UDP-MurNAc-pentapeptide onto the lipid carrier undecaprenyl phosphate, yielding undecaprenyl-pyrophosphoryl-MurNAc-pentapeptide, known as lipid I. This chain is Phospho-N-acetylmuramoyl-pentapeptide-transferase, found in Enterococcus faecalis (strain ATCC 700802 / V583).